We begin with the raw amino-acid sequence, 437 residues long: Succinyl-CoA:cyclohexane-1-carboxylate CoA transferase (437 aa).

221-225 (GWGGI) lines the CoA pocket. The 5-glutamyl coenzyme A thioester intermediate role is filled by Glu-244. Residues Leu-319, Gly-342, and Lys-367 each contribute to the CoA site.

It belongs to the acetyl-CoA hydrolase/transferase family. In terms of assembly, homodimer.

The catalysed reaction is cyclohexane-1-carboxylate + succinyl-CoA = cyclohexane-1-carbonyl-CoA + succinate. The enzyme catalyses cyclohexane-1-carboxylate + butanoyl-CoA = cyclohexane-1-carbonyl-CoA + butanoate. Its function is as follows. Acyl-CoA transferase involved in the anaerobic degradation of cyclohexane carboxylic acid (CHC). Catalyzes the activation of CHC to cyclohexane-1-carbonyl-CoA (CHCoA). Benzoic acid and cyclohex-1-ene-1-carboxylic acid can also be used as substrates, but with lower specific activity. Shows highest activity with succinyl-CoA and butanoyl-coA as a CoA donor, and lower activity with crotonyl-CoA, acetyl-CoA, glutaryl-CoA, CH1eneCoA, propionyl-CoA and acetoacetyl-CoA. In vitro, the enzyme can use butanoyl-coA as a CoA donor with greater efficiency than succinyl-CoA. However, succinyl-CoA is the most abundant CoA ester in exponentially grown cells, whereas butanoyl-coA is hardly detectable, indicating that succinyl-CoA is the natural CoA donor for CHC activation. The protein is Succinyl-CoA:cyclohexane-1-carboxylate CoA transferase of Geobacter metallireducens (strain ATCC 53774 / DSM 7210 / GS-15).